We begin with the raw amino-acid sequence, 385 residues long: Aliphatic amidase expression-regulating protein (385 aa).

In terms of assembly, homodimer. Forms a complex with AmiR.

Its function is as follows. Negatively regulates the expression of the aliphatic amidase operon. AmiC functions by inhibiting the action of AmiR at the protein level. It exhibits protein kinase activity. The chain is Aliphatic amidase expression-regulating protein (amiC) from Pseudomonas aeruginosa (strain ATCC 15692 / DSM 22644 / CIP 104116 / JCM 14847 / LMG 12228 / 1C / PRS 101 / PAO1).